Consider the following 218-residue polypeptide: Zinc metalloproteinase-disintegrin-like bothrojarin-2 (218 aa).

One can recognise a Disintegrin domain in the interval Pro-14–Asn-100. Residues Val-16, Leu-21, Glu-23, Glu-26, and Asp-29 each contribute to the Ca(2+) site. 10 disulfide bridges follow: Cys-28–Cys-46, Cys-30–Cys-41, Cys-40–Cys-63, Cys-54–Cys-60, Cys-59–Cys-85, Cys-72–Cys-92, Cys-79–Cys-111, Cys-104–Cys-116, Cys-123–Cys-173, and Cys-151–Cys-161. Positions Glu-78–Asp-80 match the D/ECD-tripeptide motif.

Belongs to the venom metalloproteinase (M12B) family. P-III subfamily. P-IIIa sub-subfamily. In terms of assembly, monomer. Zn(2+) is required as a cofactor. In terms of processing, glycosylated. In terms of tissue distribution, expressed by the venom gland.

It is found in the secreted. The hemorrhagic metalloproteinase-disintegrin-like bothrojarin-1 is a potent inhibitor of collagen-induced platelet aggregation by blockage of alpha-2/beta-1 (ITGA2/ITGB1) integrin. It does not present any fibrinogen-clotting activity. The sequence is that of Zinc metalloproteinase-disintegrin-like bothrojarin-2 from Bothrops jararaca (Jararaca).